The sequence spans 85 residues: Putative sodium channel toxin Ts34 (85 aa).

Residues 1–17 (MNLPLLLLITILIEIHA) form the signal peptide. One can recognise an LCN-type CS-alpha/beta domain in the interval 19-82 (KDGYVIYKNS…IYGETGSYCW (64 aa)). 4 cysteine pairs are disulfide-bonded: cysteine 30–cysteine 81, cysteine 34–cysteine 57, cysteine 43–cysteine 62, and cysteine 47–cysteine 64.

Belongs to the long (4 C-C) scorpion toxin superfamily. Sodium channel inhibitor family. In terms of tissue distribution, expressed by the venom gland.

The protein resides in the secreted. Its function is as follows. Putative sodium channel toxin. In Tityus serrulatus (Brazilian scorpion), this protein is Putative sodium channel toxin Ts34.